The sequence spans 148 residues: MNKYARQLKIREILHQNSVGNQHDLLQLLHDSGMRVAQATLSRDCAELGIIRSRTNGNFKMLLPDDDPDKIIKGLVGVEVLSVNANETSIIIMTLPGRAHGVGSWLDQLKSPLILGTIAGDDTVLVIPSSVLNISALKSYIHKNLSKN.

Belongs to the ArgR family.

Its subcellular location is the cytoplasm. The protein operates within amino-acid biosynthesis; L-arginine biosynthesis [regulation]. In terms of biological role, regulates arginine biosynthesis genes. In Pelodictyon phaeoclathratiforme (strain DSM 5477 / BU-1), this protein is Arginine repressor.